The following is a 929-amino-acid chain: Protein transport protein Sec16B (929 aa).

Residues M1 to P10 show a composition bias toward pro residues. Positions M1–E64 are disordered. The central conserved domain (CCD); required for localization to endoplasmic reticulum exit sites stretch occupies residues A228–V669. Disordered stretches follow at residues P675 to S727 and L781 to L929. The span at E694–W710 shows a compositional bias: basic and acidic residues. Over residues L781–S795 the composition is skewed to low complexity. Positions P838 to P848 are enriched in polar residues. Residues P856–P871 are compositionally biased toward pro residues.

It belongs to the SEC16 family. SEC16A and SEC16B are each present in multiple copies in a heteromeric complex.

It localises to the endoplasmic reticulum membrane. The protein localises to the golgi apparatus membrane. Functionally, plays a role in the organization of the endoplasmic reticulum exit sites (ERES), also known as transitional endoplasmic reticulum (tER). Required for secretory cargo traffic from the endoplasmic reticulum to the Golgi apparatus. Involved in peroxisome biogenesis. Regulates the transport of peroxisomal biogenesis factors PEX3 and PEX16 from the ER to peroxisomes. The polypeptide is Protein transport protein Sec16B (SEC16B) (Gallus gallus (Chicken)).